The primary structure comprises 294 residues: HTH-type transcriptional activator AmpR (294 aa).

The region spanning 6–63 (IPLNSLRAFEAAARQLSFTKAAIELNVTHAAISQQVKALEQRLNCRLFIRISRGLVLT) is the HTH lysR-type domain. Residues 23 to 42 (FTKAAIELNVTHAAISQQVK) constitute a DNA-binding region (H-T-H motif).

This sequence belongs to the LysR transcriptional regulatory family.

It localises to the cytoplasm. Functionally, this protein is a positive regulator of gene expression of beta-lactamase (AmpC). This is HTH-type transcriptional activator AmpR (ampR) from Yersinia enterocolitica.